A 213-amino-acid polypeptide reads, in one-letter code: Imidazole glycerol phosphate synthase subunit HisH (213 aa).

The Glutamine amidotransferase type-1 domain maps to 8-213 (TVALIDYGAG…FLSRFLDWNP (206 aa)). C91 serves as the catalytic Nucleophile. Residues H193 and E195 contribute to the active site.

In terms of assembly, heterodimer of HisH and HisF.

Its subcellular location is the cytoplasm. It carries out the reaction 5-[(5-phospho-1-deoxy-D-ribulos-1-ylimino)methylamino]-1-(5-phospho-beta-D-ribosyl)imidazole-4-carboxamide + L-glutamine = D-erythro-1-(imidazol-4-yl)glycerol 3-phosphate + 5-amino-1-(5-phospho-beta-D-ribosyl)imidazole-4-carboxamide + L-glutamate + H(+). It catalyses the reaction L-glutamine + H2O = L-glutamate + NH4(+). Its pathway is amino-acid biosynthesis; L-histidine biosynthesis; L-histidine from 5-phospho-alpha-D-ribose 1-diphosphate: step 5/9. Functionally, IGPS catalyzes the conversion of PRFAR and glutamine to IGP, AICAR and glutamate. The HisH subunit catalyzes the hydrolysis of glutamine to glutamate and ammonia as part of the synthesis of IGP and AICAR. The resulting ammonia molecule is channeled to the active site of HisF. This chain is Imidazole glycerol phosphate synthase subunit HisH, found in Zymomonas mobilis subsp. mobilis (strain ATCC 31821 / ZM4 / CP4).